We begin with the raw amino-acid sequence, 109 residues long: MFGKGGLGNLMKQAQQMQEKMQKMQEEIAQLEVTGESGAGLVKVTINGAHNCRRVEIDPSLLEDDKEMLEDLVAAAFNDAARRIEETQKEKMASVSSGMQLPPGFKMPF.

This sequence belongs to the YbaB/EbfC family. In terms of assembly, homodimer.

The protein localises to the cytoplasm. Its subcellular location is the nucleoid. Its function is as follows. Binds to DNA and alters its conformation. May be involved in regulation of gene expression, nucleoid organization and DNA protection. In Escherichia coli O127:H6 (strain E2348/69 / EPEC), this protein is Nucleoid-associated protein YbaB.